Reading from the N-terminus, the 275-residue chain is 2,3,4,5-tetrahydropyridine-2,6-dicarboxylate N-succinyltransferase (275 aa).

Arginine 106 and aspartate 143 together coordinate substrate.

It belongs to the transferase hexapeptide repeat family. In terms of assembly, homotrimer.

The protein resides in the cytoplasm. The catalysed reaction is (S)-2,3,4,5-tetrahydrodipicolinate + succinyl-CoA + H2O = (S)-2-succinylamino-6-oxoheptanedioate + CoA. The protein operates within amino-acid biosynthesis; L-lysine biosynthesis via DAP pathway; LL-2,6-diaminopimelate from (S)-tetrahydrodipicolinate (succinylase route): step 1/3. This chain is 2,3,4,5-tetrahydropyridine-2,6-dicarboxylate N-succinyltransferase, found in Ralstonia nicotianae (strain ATCC BAA-1114 / GMI1000) (Ralstonia solanacearum).